Here is a 160-residue protein sequence, read N- to C-terminus: NADH-quinone oxidoreductase subunit I (160 aa).

4Fe-4S ferredoxin-type domains lie at 52 to 81 and 91 to 120; these read RRYSNGEERCIACKLCEVICPAQAIVIEAE and TRYDIDMTKCIYCGLCQEACPVDAIVEGPN. [4Fe-4S] cluster-binding residues include Cys-61, Cys-64, Cys-67, Cys-71, Cys-100, Cys-103, Cys-106, and Cys-110.

The protein belongs to the complex I 23 kDa subunit family. NDH-1 is composed of 14 different subunits. Subunits NuoA, H, J, K, L, M, N constitute the membrane sector of the complex. It depends on [4Fe-4S] cluster as a cofactor.

The protein localises to the cell membrane. It catalyses the reaction a quinone + NADH + 5 H(+)(in) = a quinol + NAD(+) + 4 H(+)(out). NDH-1 shuttles electrons from NADH, via FMN and iron-sulfur (Fe-S) centers, to quinones in the respiratory chain. The immediate electron acceptor for the enzyme in this species is believed to be ubiquinone. Couples the redox reaction to proton translocation (for every two electrons transferred, four hydrogen ions are translocated across the cytoplasmic membrane), and thus conserves the redox energy in a proton gradient. The polypeptide is NADH-quinone oxidoreductase subunit I (Wolbachia sp. subsp. Brugia malayi (strain TRS)).